The primary structure comprises 410 residues: Elongation factor Tu (410 aa).

The region spanning 10–214 (KPHVNIGTIG…EVDAYIPTPE (205 aa)) is the tr-type G domain. The interval 19 to 26 (GHVDHGKT) is G1. Residue 19-26 (GHVDHGKT) coordinates GTP. Thr26 provides a ligand contact to Mg(2+). Residues 60-64 (GITIN) are G2. The G3 stretch occupies residues 81-84 (DCPG). GTP contacts are provided by residues 81 to 85 (DCPGH) and 136 to 139 (NKAD). A G4 region spans residues 136–139 (NKAD). Positions 174–176 (SAL) are G5.

Belongs to the TRAFAC class translation factor GTPase superfamily. Classic translation factor GTPase family. EF-Tu/EF-1A subfamily. As to quaternary structure, monomer.

The protein localises to the cytoplasm. It catalyses the reaction GTP + H2O = GDP + phosphate + H(+). In terms of biological role, GTP hydrolase that promotes the GTP-dependent binding of aminoacyl-tRNA to the A-site of ribosomes during protein biosynthesis. The polypeptide is Elongation factor Tu (Arthrospira platensis (Spirulina platensis)).